Consider the following 177-residue polypeptide: Disulfide bond formation protein B (177 aa).

Residues 1–14 (MLALLKQFSEKRFV) are Cytoplasmic-facing. Residues 15 to 31 (WFLLAFSSLALESTALY) traverse the membrane as a helical segment. Topologically, residues 32 to 49 (FQYGMGLQPCVLCVYERL) are periplasmic. C41 and C44 are oxidised to a cystine. Residues 50-65 (AMIGLFVAGTIALLQP) traverse the membrane as a helical segment. The Cytoplasmic portion of the chain corresponds to 66–72 (RVFILRL). Residues 73–90 (IALALGLFSSIKGLLISF) form a helical membrane-spanning segment. Residues 91–145 (RHLDLQMNPAPWKQCEFIPNFPETLPFHQWFPFIFNPTGSCNESQWSLFGLTMVQ) lie on the Periplasmic side of the membrane. A disulfide bond links C105 and C131. A helical transmembrane segment spans residues 146–164 (WLVVIFSLYVVILTLLLIA). Over 165–177 (QVIKTRKQRRLFN) the chain is Cytoplasmic.

The protein belongs to the DsbB family.

It localises to the cell inner membrane. In terms of biological role, required for disulfide bond formation in some periplasmic proteins. Acts by oxidizing the DsbA protein. This chain is Disulfide bond formation protein B, found in Haemophilus influenzae (strain ATCC 51907 / DSM 11121 / KW20 / Rd).